The primary structure comprises 330 residues: Glucan endo-1,3-beta-glucosidase GIII (330 aa).

Residues 1–25 (MARKGVDVAVALVLVALAAFPAVHS) form the signal peptide. Catalysis depends on glutamate 117, which acts as the Proton donor. The Nucleophile role is filled by glutamate 255.

The protein belongs to the glycosyl hydrolase 17 family.

It carries out the reaction Hydrolysis of (1-&gt;3)-beta-D-glucosidic linkages in (1-&gt;3)-beta-D-glucans.. Its function is as follows. May provide a degree of protection against microbial invasion of germinated barley grain through its ability to degrade fungal cell wall polysaccharides. The sequence is that of Glucan endo-1,3-beta-glucosidase GIII from Hordeum vulgare (Barley).